Consider the following 894-residue polypeptide: Microsomal triglyceride transfer protein large subunit (894 aa).

Residues 1 to 18 (MILLAVLFLCFISSYSAS) form the signal peptide. The Vitellogenin domain occupies 28–662 (LNNDRLYKLK…YVGKTPLHAI (635 aa)). Cysteine 174 and cysteine 194 are oxidised to a cystine.

As to quaternary structure, heterodimer; heterodimerizes with the protein disulfide isomerase (P4HB/PDI). Interacts with APOB. Interacts with PRAP1.

The protein resides in the endoplasmic reticulum. It localises to the golgi apparatus. The catalysed reaction is a 1,2-diacyl-sn-glycero-3-phosphocholine(in) = a 1,2-diacyl-sn-glycero-3-phosphocholine(out). It carries out the reaction a 1,2-diacyl-sn-glycero-3-phosphoethanolamine(in) = a 1,2-diacyl-sn-glycero-3-phosphoethanolamine(out). It catalyses the reaction a cholesterol ester(in) = a cholesterol ester(out). The enzyme catalyses a triacyl-sn-glycerol(in) = a triacyl-sn-glycerol(out). In terms of biological role, catalyzes the transport of triglyceride, cholesteryl ester, and phospholipid between phospholipid surfaces. Required for the assembly and secretion of plasma lipoproteins that contain apolipoprotein B. May be involved in regulating cholesteryl ester biosynthesis in cells that produce lipoproteins. The polypeptide is Microsomal triglyceride transfer protein large subunit (MTTP) (Sus scrofa (Pig)).